A 149-amino-acid polypeptide reads, in one-letter code: Large ribosomal subunit protein bL9 (149 aa).

Belongs to the bacterial ribosomal protein bL9 family.

Its function is as follows. Binds to the 23S rRNA. This is Large ribosomal subunit protein bL9 from Vibrio vulnificus (strain CMCP6).